A 352-amino-acid chain; its full sequence is Ion-translocating oxidoreductase complex subunit D (352 aa).

The next 5 membrane-spanning stretches (helical) occupy residues 20–40 (IMLLVLLAAVPGIAAQLWFFG), 42–62 (GTLVQILLASVSALLAEALVL), 78–109 (ALLTGLLLAVSIPPLAPWWMVVLGTVFAVIIA), 123–143 (PAMIGYVVLLISFPVQMTSWL), and 148–168 (IAVNIPGFIDAIQVIFSGHTA). Thr187 bears the FMN phosphoryl threonine mark. The next 4 membrane-spanning stretches (helical) occupy residues 214 to 234 (ILAGAGWQWVNLAWLAGGVWL), 242 to 262 (WHIPLSFLVTLALCATLGWLF), 267 to 287 (LAAPQIHLLSGATMLGAFFIL), and 301 to 318 (LMFGALAGLLVWLIRSFG).

Belongs to the NqrB/RnfD family. The complex is composed of six subunits: RsxA, RsxB, RsxC, RsxD, RsxE and RsxG. FMN serves as cofactor.

The protein resides in the cell inner membrane. Functionally, part of a membrane-bound complex that couples electron transfer with translocation of ions across the membrane. Required to maintain the reduced state of SoxR. The protein is Ion-translocating oxidoreductase complex subunit D of Shigella flexneri serotype 5b (strain 8401).